The chain runs to 238 residues: ATP synthase subunit a (238 aa).

5 consecutive transmembrane segments (helical) span residues 18-38 (LTLL…VFWA), 76-96 (YSLL…LGLF), 114-134 (NLAF…IEGI), 166-186 (SLAI…GLIV), and 193-213 (LYWW…SIFI).

Belongs to the ATPase A chain family. In terms of assembly, F-type ATPases have 2 components, CF(1) - the catalytic core - and CF(0) - the membrane proton channel. CF(1) has five subunits: alpha(3), beta(3), gamma(1), delta(1), epsilon(1). CF(0) has three main subunits: a(1), b(2) and c(9-12). The alpha and beta chains form an alternating ring which encloses part of the gamma chain. CF(1) is attached to CF(0) by a central stalk formed by the gamma and epsilon chains, while a peripheral stalk is formed by the delta and b chains.

It is found in the cell membrane. In terms of biological role, key component of the proton channel; it plays a direct role in the translocation of protons across the membrane. In Streptococcus equi subsp. zooepidemicus (strain H70), this protein is ATP synthase subunit a.